A 429-amino-acid chain; its full sequence is Phosphomethylpyrimidine synthase (429 aa).

Residues Asn66, Met95, Tyr124, His163, Ser185 to Gly187, Asp226 to Arg229, and Glu265 each bind substrate. His269 contributes to the Zn(2+) binding site. Substrate is bound at residue Tyr292. A Zn(2+)-binding site is contributed by His333. Residues Cys409, Cys412, and Cys416 each coordinate [4Fe-4S] cluster.

The protein belongs to the ThiC family. It depends on [4Fe-4S] cluster as a cofactor.

It carries out the reaction 5-amino-1-(5-phospho-beta-D-ribosyl)imidazole + S-adenosyl-L-methionine = 4-amino-2-methyl-5-(phosphooxymethyl)pyrimidine + CO + 5'-deoxyadenosine + formate + L-methionine + 3 H(+). Its pathway is cofactor biosynthesis; thiamine diphosphate biosynthesis. Catalyzes the synthesis of the hydroxymethylpyrimidine phosphate (HMP-P) moiety of thiamine from aminoimidazole ribotide (AIR) in a radical S-adenosyl-L-methionine (SAM)-dependent reaction. This Carboxydothermus hydrogenoformans (strain ATCC BAA-161 / DSM 6008 / Z-2901) protein is Phosphomethylpyrimidine synthase.